A 354-amino-acid polypeptide reads, in one-letter code: Protein FAM181A (354 aa).

Basic and acidic residues-rich tracts occupy residues 1–14 (MPLE…ERND) and 129–142 (YLKR…RRLL). 3 disordered regions span residues 1–35 (MPLE…KQVS), 117–160 (LPRG…CKEK), and 172–193 (AKEQ…VPMR).

Belongs to the FAM181 family.

The polypeptide is Protein FAM181A (FAM181A) (Homo sapiens (Human)).